The following is a 522-amino-acid chain: N-acetylgalactosamine-6-sulfatase (522 aa).

Positions 1–25 (MAPVAAATGWRLLLVLSAAGLGAAG) are cleaved as a signal peptide. The tract at residues 27–379 (PQPPNILLLL…PAMLGGQLTD (353 aa)) is catalytic domain. Positions 38, 39, and 78 each coordinate Ca(2+). The active-site Nucleophile is the cysteine 78. The residue at position 78 (cysteine 78) is a 3-oxoalanine (Cys). Histidine 141 is a catalytic residue. The N-linked (GlcNAc...) asparagine glycan is linked to asparagine 203. Ca(2+) is bound by residues aspartate 288 and asparagine 289. Cysteine 308 and cysteine 419 are joined by a disulfide. A glycan (N-linked (GlcNAc...) asparagine) is linked at asparagine 423. Cystine bridges form between cysteine 489–cysteine 518 and cysteine 501–cysteine 507.

This sequence belongs to the sulfatase family. Homodimer. It depends on Ca(2+) as a cofactor. Post-translationally, the conversion to 3-oxoalanine (also known as C-formylglycine, FGly), of a serine or cysteine residue in prokaryotes and of a cysteine residue in eukaryotes, is critical for catalytic activity.

It is found in the lysosome. The enzyme catalyses Hydrolysis of the 6-sulfate groups of the N-acetyl-D-galactosamine 6-sulfate units of chondroitin sulfate and of the D-galactose 6-sulfate units of keratan sulfate.. The sequence is that of N-acetylgalactosamine-6-sulfatase (GALNS) from Canis lupus familiaris (Dog).